A 456-amino-acid chain; its full sequence is ATP synthase subunit beta 1 (456 aa).

152–159 (GGAGVGKS) lines the ATP pocket.

Belongs to the ATPase alpha/beta chains family. As to quaternary structure, F-type ATPases have 2 components, CF(1) - the catalytic core - and CF(0) - the membrane proton channel. CF(1) has five subunits: alpha(3), beta(3), gamma(1), delta(1), epsilon(1). CF(0) has three main subunits: a(1), b(2) and c(9-12). The alpha and beta chains form an alternating ring which encloses part of the gamma chain. CF(1) is attached to CF(0) by a central stalk formed by the gamma and epsilon chains, while a peripheral stalk is formed by the delta and b chains.

Its subcellular location is the cell membrane. It catalyses the reaction ATP + H2O + 4 H(+)(in) = ADP + phosphate + 5 H(+)(out). In terms of biological role, produces ATP from ADP in the presence of a proton gradient across the membrane. The catalytic sites are hosted primarily by the beta subunits. In Listeria monocytogenes serotype 4b (strain F2365), this protein is ATP synthase subunit beta 1.